A 1581-amino-acid chain; its full sequence is Pentafunctional AROM polypeptide (1581 aa).

Residues 1–384 (MPEPTKISIL…YEPKASVVPN (384 aa)) form a 3-dehydroquinate synthase region. NAD(+) is bound by residues 44-46 (DTN), 81-84 (EVSK), 114-116 (GGV), and aspartate 119. Arginine 130 is a 7-phospho-2-dehydro-3-deoxy-D-arabino-heptonate binding site. 139–140 (TT) contacts NAD(+). The 7-phospho-2-dehydro-3-deoxy-D-arabino-heptonate site is built by aspartate 146 and lysine 152. Residue lysine 161 coordinates NAD(+). A 7-phospho-2-dehydro-3-deoxy-D-arabino-heptonate-binding site is contributed by asparagine 162. NAD(+)-binding positions include 179-182 (FLET) and asparagine 190. Residue glutamate 194 coordinates Zn(2+). 7-phospho-2-dehydro-3-deoxy-D-arabino-heptonate is bound by residues 194–197 (EVIK) and lysine 250. Glutamate 260 functions as the Proton acceptor; for 3-dehydroquinate synthase activity in the catalytic mechanism. 7-phospho-2-dehydro-3-deoxy-D-arabino-heptonate contacts are provided by residues 264–268 (RNLLN) and histidine 271. Residue histidine 271 participates in Zn(2+) binding. The Proton acceptor; for 3-dehydroquinate synthase activity role is filled by histidine 275. 7-phospho-2-dehydro-3-deoxy-D-arabino-heptonate-binding residues include histidine 287 and lysine 356. Histidine 287 provides a ligand contact to Zn(2+). Positions 397–842 (VHPGVPKESN…WDTLRQLFSV (446 aa)) are EPSP synthase. Cysteine 824 functions as the For EPSP synthase activity in the catalytic mechanism. A shikimate kinase region spans residues 864-1056 (SASVFIIGMR…KQKKHSFFVS (193 aa)). 871-878 (GMRGAGKT) lines the ATP pocket. Residues 1057–1277 (LTLPDLRSAS…AAPGQLSATE (221 aa)) form a 3-dehydroquinase region. The Proton acceptor; for 3-dehydroquinate dehydratase activity role is filled by histidine 1180. Lysine 1208 functions as the Schiff-base intermediate with substrate; for 3-dehydroquinate dehydratase activity in the catalytic mechanism. The interval 1290 to 1581 (KKRFAIFGNP…ARTAVLGDSA (292 aa)) is shikimate dehydrogenase.

This sequence in the N-terminal section; belongs to the sugar phosphate cyclases superfamily. Dehydroquinate synthase family. The protein in the 2nd section; belongs to the EPSP synthase family. It in the 3rd section; belongs to the shikimate kinase family. In the 4th section; belongs to the type-I 3-dehydroquinase family. This sequence in the C-terminal section; belongs to the shikimate dehydrogenase family. In terms of assembly, homodimer. Zn(2+) is required as a cofactor.

The protein resides in the cytoplasm. It carries out the reaction 7-phospho-2-dehydro-3-deoxy-D-arabino-heptonate = 3-dehydroquinate + phosphate. The enzyme catalyses 3-dehydroquinate = 3-dehydroshikimate + H2O. It catalyses the reaction shikimate + NADP(+) = 3-dehydroshikimate + NADPH + H(+). The catalysed reaction is shikimate + ATP = 3-phosphoshikimate + ADP + H(+). It carries out the reaction 3-phosphoshikimate + phosphoenolpyruvate = 5-O-(1-carboxyvinyl)-3-phosphoshikimate + phosphate. Its pathway is metabolic intermediate biosynthesis; chorismate biosynthesis; chorismate from D-erythrose 4-phosphate and phosphoenolpyruvate: step 2/7. The protein operates within metabolic intermediate biosynthesis; chorismate biosynthesis; chorismate from D-erythrose 4-phosphate and phosphoenolpyruvate: step 3/7. It participates in metabolic intermediate biosynthesis; chorismate biosynthesis; chorismate from D-erythrose 4-phosphate and phosphoenolpyruvate: step 4/7. It functions in the pathway metabolic intermediate biosynthesis; chorismate biosynthesis; chorismate from D-erythrose 4-phosphate and phosphoenolpyruvate: step 5/7. Its pathway is metabolic intermediate biosynthesis; chorismate biosynthesis; chorismate from D-erythrose 4-phosphate and phosphoenolpyruvate: step 6/7. Functionally, the AROM polypeptide catalyzes 5 consecutive enzymatic reactions in prechorismate polyaromatic amino acid biosynthesis. This is Pentafunctional AROM polypeptide from Aspergillus terreus (strain NIH 2624 / FGSC A1156).